A 117-amino-acid polypeptide reads, in one-letter code: Large ribosomal subunit protein bL20c (117 aa).

It belongs to the bacterial ribosomal protein bL20 family.

Its subcellular location is the plastid. The protein localises to the chloroplast. In terms of biological role, binds directly to 23S ribosomal RNA and is necessary for the in vitro assembly process of the 50S ribosomal subunit. It is not involved in the protein synthesizing functions of that subunit. This is Large ribosomal subunit protein bL20c from Populus trichocarpa (Western balsam poplar).